The following is a 1107-amino-acid chain: RNA2 polyprotein (1107 aa).

Residues 553-584 (SRSMRFKSPSDLWSRPSVDGGSTSTQPPSKGS) are disordered. Over residues 572 to 581 (GGSTSTQPPS) the composition is skewed to polar residues.

The protein belongs to the nepoviruses RNA2 polyprotein family. Post-translationally, specific enzymatic cleavages in vivo by the P1 encoded 3C-like protease yield mature proteins.

It is found in the host cell junction. Its subcellular location is the host plasmodesma. The protein resides in the host cytoplasm. The protein localises to the host nucleus. It localises to the virion. In terms of biological role, implicated in RNA2 replication. Could also be required for nematode transmission of the virus. Functionally, transports viral genome to neighboring plant cells directly through plasmosdesmata, without any budding. The movement protein allows efficient cell to cell propagation, by bypassing the host cell wall barrier. Acts by forming a tubular structure at the host plasmodesmata, enlarging it enough to allow free passage of virion capsids. The protein is RNA2 polyprotein of Raspberry ringspot virus (strain S) (RpRSV).